Consider the following 535-residue polypeptide: MTDQTTRLPIRRALISVSDKTGILEFAKELEALGVEILSTGGTFKLLQDNGVSAVEVADYTGFAEMMDGRVKTLHPKIHGGILGRRGIDDAIMNEHGIKPIDLVAVNLYPFEATINKPGCDLPTAIENIDIGGPTMVRSAAKNHKDVAIVVNASDYAGVLESLKAGGLTYAQRFDLMLKAFEHTAAYDGMIANYMGTVNQAAETLSTSGRSEFPRTFNSQFIKAQEMRYGENPHQSAAFYVEAKPAEVGIATATQLQGKELSYNNVADTDAALECVKSFVKPACVIVKHANPCGVAVSPDAEGGIRQAYELAYATDTESAFGGIIAFNRELDAATAKAIVERQFVEVIIAPSVSEEARAIVAAKANVRLLACGQWSAERAAAWDYKRVNGGLLVQSRDIGMISADDLKVVTKRAPTEQEINDLIFAWKVAKYVKSNAIVYAKNRQTIGVGAGQMSRVNSARIAAIKAEHAGLQVAGSVMASDAFFPFRDGLDNAAKVGITAVIQPGGSMRDNEVIAAADEAGIAMVFTGMRHFRH.

Residues 6–151 (TRLPIRRALI…KNHKDVAIVV (146 aa)) enclose the MGS-like domain.

The protein belongs to the PurH family.

It catalyses the reaction (6R)-10-formyltetrahydrofolate + 5-amino-1-(5-phospho-beta-D-ribosyl)imidazole-4-carboxamide = 5-formamido-1-(5-phospho-D-ribosyl)imidazole-4-carboxamide + (6S)-5,6,7,8-tetrahydrofolate. It carries out the reaction IMP + H2O = 5-formamido-1-(5-phospho-D-ribosyl)imidazole-4-carboxamide. It participates in purine metabolism; IMP biosynthesis via de novo pathway; 5-formamido-1-(5-phospho-D-ribosyl)imidazole-4-carboxamide from 5-amino-1-(5-phospho-D-ribosyl)imidazole-4-carboxamide (10-formyl THF route): step 1/1. It functions in the pathway purine metabolism; IMP biosynthesis via de novo pathway; IMP from 5-formamido-1-(5-phospho-D-ribosyl)imidazole-4-carboxamide: step 1/1. In Pseudomonas fluorescens (strain ATCC BAA-477 / NRRL B-23932 / Pf-5), this protein is Bifunctional purine biosynthesis protein PurH.